The sequence spans 1638 residues: ATP-dependent helicase brm (1638 aa).

Disordered stretches follow at residues 1-137 and 201-387; these read MASP…SQEN and QMQQ…GMPM. Pro residues predominate over residues 7 to 51; the sequence is ANSPMPPPQAPSPMAPPSQSPAPSPHSPYPHQQPGPLQGPPPPGH. Positions 52-63 are enriched in low complexity; sequence PGAYGHPMQHGP. Residues 121 to 131 show a composition bias toward pro residues; that stretch reads GGPPGGPPPPE. In terms of domain architecture, QLQ spans 173-208; the sequence is HLNGNQVNLLRTQITAYRLLARNKPISMQMQQALQA. The segment covering 201–211 has biased composition (low complexity); sequence QMQQALQAAQQ. Pro residues-rich tracts occupy residues 212 to 231, 238 to 253, 263 to 272, and 279 to 304; these read QPPP…PPPG, PPVP…PSAG, ASNPYGPPVP, and APPP…PPPI. Low complexity-rich tracts occupy residues 305–317 and 365–382; these read QQQQ…QQQS and PGSQ…QVPP. In terms of domain architecture, HSA spans 501-573; that stretch reads QKLEAERKRR…EKERMRRLMA (73 aa). Positions 691-730 are disordered; that stretch reads DEEDSCGSNDDHKPKVEEQPTATEDATDKAQATGNDEDAK. Residues Ser695 and Ser698 each carry the phosphoserine modification. Residues 699 to 708 show a composition bias toward basic and acidic residues; that stretch reads NDDHKPKVEE. Over residues 710 to 724 the composition is skewed to polar residues; sequence PTATEDATDKAQATG. One can recognise a Helicase ATP-binding domain in the interval 785-950; it reads VSLYNNNLNG…WALLNFLLPS (166 aa). Residue 798 to 805 participates in ATP binding; that stretch reads DEMGLGKT. Positions 900–903 match the DEGH box motif; that stretch reads DEGH. The region spanning 1102 to 1263 is the Helicase C-terminal domain; the sequence is LLDRILPKLK…QKSTGSERQQ (162 aa). Over residues 1380-1391 the composition is skewed to acidic residues; it reads DGAEFDEEEEED. Positions 1380–1412 are disordered; the sequence is DGAEFDEEEEEDDSKRKRRKRKNRKEESDDDSL. Phosphoserine is present on residues Ser1407 and Ser1411. Residues 1425-1530 enclose the Bromo domain; it reads RSKKQMHKIM…KVFVGARQRI (106 aa). The segment at 1544 to 1578 is disordered; that stretch reads NTGEAHGNGGSDNSDNDDDDGGDDGSDDEEIATTS. Acidic residues predominate over residues 1557–1574; sequence SDNDDDDGGDDGSDDEEI. A phosphoserine mark is found at Ser1591 and Ser1594. The segment covering 1592-1604 has biased composition (low complexity); that stretch reads LASAPATPTQSSS. Residues 1592 to 1638 form a disordered region; the sequence is LASAPATPTQSSSNVSSGAATTSKKQTRRKRSQKKYTISDDDDDDMD. Basic residues predominate over residues 1616–1625; it reads KQTRRKRSQK.

Component of the Brahma complex, which is composed of brm, osa, mor, Snr1/Bap45, dalao/Bap111, Bap55, Bap60 and Act42A/Bap47. Interacts with asf1. Associates with the brm-HDAC3-erm repressor complex, composed of brm, HDAC3 and erm. Interacts with erm and HDAC3.

It is found in the nucleus. The enzyme catalyses ATP + H2O = ADP + phosphate + H(+). In terms of biological role, transcriptional regulator. Acts as a coactivator, assisting one or more dedicated transcriptional activators of ANTC and BXC homeotic gene clusters. Can counteract the repressive effect of Polycomb protein. ATPase subunit of the Brahma complex, a multiprotein complex which is the equivalent of the yeast SWI/SNF complex and acts by remodeling the chromatin by catalyzing an ATP-dependent alteration in the structure of nucleosomal DNA. This complex can both serve as a transcriptional coactivator or corepressor, depending on the context. In type II neuroblast lineage, as part of the Brm remodeling complex, suppresses the formation of ectopic neuroblasts probably through interaction with erm and HDAC3. The protein is ATP-dependent helicase brm (brm) of Drosophila melanogaster (Fruit fly).